The chain runs to 375 residues: MTDVEGLLDGQFTLGIEEEFQIVDAETRELRSYVSQLLEGGPGHELLRGRARPEMHQSVVETGTGVCRDIRQARGELVELRGSLNALARRGGMRIVAAGTHPFSDWKKQDITDGERYRCIVEDLQDVARANLIFGLHVHVGVKDREVAMALANQVRYFLPHILALSTSSPFWLGRPSGLKSTRSEIFKRFPRTGIPGLFESHGHFQRFVDLLVKTGCIDNAKKIWWDVRPHPFFDTVEVRICDMTTRLDDTVALAALVQAVMGKLYLLYRRNLGFREYRQELIEENKWRAVRYGLDGQLIDFGKQEQVPVRHLVGELLEFVQESAEIFGSQRELERVRRILHEGTSADRQLAVYARTKSFHAVVDDLIEQSSLGL.

The protein belongs to the glutamate--cysteine ligase type 2 family. YbdK subfamily.

It catalyses the reaction L-cysteine + L-glutamate + ATP = gamma-L-glutamyl-L-cysteine + ADP + phosphate + H(+). Its function is as follows. ATP-dependent carboxylate-amine ligase which exhibits weak glutamate--cysteine ligase activity. The sequence is that of Putative glutamate--cysteine ligase 2 from Sorangium cellulosum (strain So ce56) (Polyangium cellulosum (strain So ce56)).